The chain runs to 155 residues: Transcriptional repressor NrdR (155 aa).

Residues 1-22 (MRCPFCGHDETQVKDSRPSEDG) are disordered. A zinc finger lies at 3–34 (CPFCGHDETQVKDSRPSEDGAAIRRRRLCPQC). The span at 7-22 (GHDETQVKDSRPSEDG) shows a compositional bias: basic and acidic residues. The region spanning 49 to 139 (ITILKRSGRR…VYRDFRETQD (91 aa)) is the ATP-cone domain.

Belongs to the NrdR family. Requires Zn(2+) as cofactor.

Its function is as follows. Negatively regulates transcription of bacterial ribonucleotide reductase nrd genes and operons by binding to NrdR-boxes. The sequence is that of Transcriptional repressor NrdR from Phenylobacterium zucineum (strain HLK1).